A 128-amino-acid polypeptide reads, in one-letter code: Saitohin (128 aa).

The segment at 77 to 128 is disordered; sequence SYSSEESSRNGAEQGRQLSIEGPFQGQNCPSHPAAALPLPMRGESQATSCQV.

Interacts with PRDX6.

The protein localises to the cytoplasm. It is found in the nucleus. This chain is Saitohin (STH), found in Gorilla gorilla gorilla (Western lowland gorilla).